The primary structure comprises 132 residues: Flagellar assembly factor FliW (132 aa).

Belongs to the FliW family. In terms of assembly, interacts with translational regulator CsrA and flagellin(s).

The protein localises to the cytoplasm. Its function is as follows. Acts as an anti-CsrA protein, binds CsrA and prevents it from repressing translation of its target genes, one of which is flagellin. Binds to flagellin and participates in the assembly of the flagellum. This chain is Flagellar assembly factor FliW, found in Borreliella afzelii (strain PKo) (Borrelia afzelii).